Reading from the N-terminus, the 113-residue chain is MTGTGKTVTRVDLCEAVYQKVGLSRTESSAFVELVLKEITDCLEKGETVKLSSFGSFMVRQKGQRIGRNPKTGTEVPISPRRVMVFKPSAILKQRINGQANGSMSNSDQAETD.

The protein belongs to the bacterial histone-like protein family. In terms of assembly, heterodimer of an alpha and a beta chain.

In terms of biological role, this protein is one of the two subunits of integration host factor, a specific DNA-binding protein that functions in genetic recombination as well as in transcriptional and translational control. The chain is Integration host factor subunit alpha from Rhodopseudomonas palustris (strain BisA53).